The sequence spans 123 residues: Gamma-synuclein (123 aa).

Repeat copies occupy residues 20–30 (EKTKQGVTEAA) and 31–41 (EKTKEGVMYVG). Residues 20 to 67 (EKTKQGVTEAAEKTKEGVMYVGTKTKENVVQSVTSVAEKTKEQANAVS) are 4 X 11 AA tandem repeats of [EGSA]-K-T-K-[EQ]-[GQ]-V-X(4). The stretch at 42 to 56 (TKTKENVVQSVTSVA) is one 3; approximate repeat. Repeat unit 4 spans residues 57–67 (EKTKEQANAVS). Ser-67 and Ser-72 each carry phosphoserine. Positions 91–123 (TTGVVRKEDLEPPAQDQEAKEQEENEEAKSGED) are disordered. Over residues 107–123 (QEAKEQEENEEAKSGED) the composition is skewed to basic and acidic residues. Ser-120 carries the phosphoserine; by BARK1, CaMK2 and CK2 modification.

It belongs to the synuclein family. In terms of assembly, may be a centrosome-associated protein. Interacts with MYOC; affects its secretion and its aggregation. Post-translationally, phosphorylated. Phosphorylation by GRK5 appears to occur on residues distinct from the residue phosphorylated by other kinases. Highly expressed in brain, particularly in the substantia nigra. Also expressed in the corpus callosum, heart, skeletal muscle, ovary, testis, colon and spleen. Weak expression in pancreas, kidney and lung. Expressed predominantly in the cell bodies and axons of primary sensory neurons, sympathetic neurons and motoneurons.

It is found in the cytoplasm. The protein localises to the perinuclear region. The protein resides in the cytoskeleton. Its subcellular location is the microtubule organizing center. It localises to the centrosome. It is found in the spindle. Functionally, plays a role in neurofilament network integrity. May be involved in modulating axonal architecture during development and in the adult. In vitro, increases the susceptibility of neurofilament-H to calcium-dependent proteases. May also function in modulating the keratin network in skin. Activates the MAPK and Elk-1 signal transduction pathway. In Mus musculus (Mouse), this protein is Gamma-synuclein (Sncg).